Reading from the N-terminus, the 207-residue chain is ATP synthase subunit b (207 aa).

An N-terminal signal peptide occupies residues 1-27 (MKLRATFVFKTTLVALSFALFALFLVS). Cys-28 carries the N-palmitoyl cysteine lipid modification. Cys-28 is lipidated: S-diacylglycerol cysteine. Residues 49 to 69 (WVFLAHLLAFVILLFLLLFLF) form a helical membrane-spanning segment.

It belongs to the ATPase B chain family. F-type ATPases have 2 components, F(1) - the catalytic core - and F(0) - the membrane proton channel. F(1) has five subunits: alpha(3), beta(3), gamma(1), delta(1), epsilon(1). F(0) has three main subunits: a(1), b(2) and c(10-14). The alpha and beta chains form an alternating ring which encloses part of the gamma chain. F(1) is attached to F(0) by a central stalk formed by the gamma and epsilon chains, while a peripheral stalk is formed by the delta and b chains.

The protein resides in the cell membrane. F(1)F(0) ATP synthase produces ATP from ADP in the presence of a proton or sodium gradient. F-type ATPases consist of two structural domains, F(1) containing the extramembraneous catalytic core and F(0) containing the membrane proton channel, linked together by a central stalk and a peripheral stalk. During catalysis, ATP synthesis in the catalytic domain of F(1) is coupled via a rotary mechanism of the central stalk subunits to proton translocation. In terms of biological role, component of the F(0) channel, it forms part of the peripheral stalk, linking F(1) to F(0). This chain is ATP synthase subunit b, found in Mycoplasma pneumoniae (strain ATCC 29342 / M129 / Subtype 1) (Mycoplasmoides pneumoniae).